The sequence spans 132 residues: Photosystem II extrinsic protein U (132 aa).

Residues M1 to A29 form the signal peptide.

It belongs to the PsbU family. In terms of assembly, PSII is composed of 1 copy each of membrane proteins PsbA, PsbB, PsbC, PsbD, PsbE, PsbF, PsbH, PsbI, PsbJ, PsbK, PsbL, PsbM, PsbT, PsbX, PsbY, PsbZ, Psb30/Ycf12, peripheral proteins PsbO, CyanoQ (PsbQ), PsbU, PsbV and a large number of cofactors. It forms dimeric complexes.

It localises to the cellular thylakoid membrane. In terms of biological role, one of the extrinsic, lumenal subunits of photosystem II (PSII). PSII is a light-driven water plastoquinone oxidoreductase, using light energy to abstract electrons from H(2)O, generating a proton gradient subsequently used for ATP formation. The extrinsic proteins stabilize the structure of photosystem II oxygen-evolving complex (OEC), the ion environment of oxygen evolution and protect the OEC against heat-induced inactivation. The polypeptide is Photosystem II extrinsic protein U (Synechococcus sp. (strain CC9902)).